The primary structure comprises 305 residues: Sodium/potassium-transporting ATPase subunit beta-1 (305 aa).

Residues 1 to 32 (MAREKSTDDGGGWKKFLWDSEKKQVLGRTGTS) lie on the Cytoplasmic side of the membrane. Residues 33 to 53 (WFKIFVFYLIFYGCLAGIFIG) traverse the membrane as a helical; Signal-anchor for type II membrane protein segment. The Extracellular portion of the chain corresponds to 54–305 (TIQVMLLTIS…RFEVKIEVKS (252 aa)). N-linked (GlcNAc...) asparagine glycosylation occurs at Asn-114. Cys-127 and Cys-150 form a disulfide bridge. N-linked (GlcNAc...) asparagine glycosylation is present at Asn-159. Cysteines 160 and 176 form a disulfide. N-linked (GlcNAc...) asparagine glycosylation is found at Asn-194 and Asn-267. Cys-215 and Cys-278 are joined by a disulfide.

The protein belongs to the X(+)/potassium ATPases subunit beta family. The sodium/potassium-transporting ATPase is composed of a catalytic alpha subunit, an auxiliary non-catalytic beta subunit and an additional regulatory subunit.

The protein localises to the cell membrane. This is the non-catalytic component of the active enzyme, which catalyzes the hydrolysis of ATP coupled with the exchange of Na(+) and K(+) ions across the plasma membrane. The beta subunit regulates, through assembly of alpha/beta heterodimers, the number of sodium pumps transported to the plasma membrane. The sequence is that of Sodium/potassium-transporting ATPase subunit beta-1 (atp1b1) from Tetronarce californica (Pacific electric ray).